The chain runs to 394 residues: Queuine tRNA-ribosyltransferase (394 aa).

Catalysis depends on Asp-95, which acts as the Proton acceptor. Substrate-binding positions include 95 to 99 (DSGGF), Asp-149, Gln-190, and Gly-217. Residues 248–254 (GVGTPID) are RNA binding. Asp-267 acts as the Nucleophile in catalysis. The segment at 272–276 (TRNAR) is RNA binding; important for wobble base 34 recognition. 4 residues coordinate Zn(2+): Cys-305, Cys-307, Cys-310, and His-337. The segment at 375–394 (NDANETVGATESTESTESTE) is disordered.

This sequence belongs to the queuine tRNA-ribosyltransferase family. Homodimer. Within each dimer, one monomer is responsible for RNA recognition and catalysis, while the other monomer binds to the replacement base PreQ1. The cofactor is Zn(2+).

It carries out the reaction 7-aminomethyl-7-carbaguanine + guanosine(34) in tRNA = 7-aminomethyl-7-carbaguanosine(34) in tRNA + guanine. Its pathway is tRNA modification; tRNA-queuosine biosynthesis. Its function is as follows. Catalyzes the base-exchange of a guanine (G) residue with the queuine precursor 7-aminomethyl-7-deazaguanine (PreQ1) at position 34 (anticodon wobble position) in tRNAs with GU(N) anticodons (tRNA-Asp, -Asn, -His and -Tyr). Catalysis occurs through a double-displacement mechanism. The nucleophile active site attacks the C1' of nucleotide 34 to detach the guanine base from the RNA, forming a covalent enzyme-RNA intermediate. The proton acceptor active site deprotonates the incoming PreQ1, allowing a nucleophilic attack on the C1' of the ribose to form the product. After dissociation, two additional enzymatic reactions on the tRNA convert PreQ1 to queuine (Q), resulting in the hypermodified nucleoside queuosine (7-(((4,5-cis-dihydroxy-2-cyclopenten-1-yl)amino)methyl)-7-deazaguanosine). The polypeptide is Queuine tRNA-ribosyltransferase (Sorangium cellulosum (strain So ce56) (Polyangium cellulosum (strain So ce56))).